A 70-amino-acid chain; its full sequence is ATP synthase subunit c (70 aa).

The next 2 membrane-spanning stretches (helical) occupy residues 4–24 (IASAIAIGLAALGAGIGNGLI) and 47–67 (FVGVALVEALPIIAVVIAFMV).

This sequence belongs to the ATPase C chain family. As to quaternary structure, F-type ATPases have 2 components, F(1) - the catalytic core - and F(0) - the membrane proton channel. F(1) has five subunits: alpha(3), beta(3), gamma(1), delta(1), epsilon(1). F(0) has three main subunits: a(1), b(2) and c(10-14). The alpha and beta chains form an alternating ring which encloses part of the gamma chain. F(1) is attached to F(0) by a central stalk formed by the gamma and epsilon chains, while a peripheral stalk is formed by the delta and b chains.

It localises to the cell membrane. Functionally, f(1)F(0) ATP synthase produces ATP from ADP in the presence of a proton or sodium gradient. F-type ATPases consist of two structural domains, F(1) containing the extramembraneous catalytic core and F(0) containing the membrane proton channel, linked together by a central stalk and a peripheral stalk. During catalysis, ATP synthesis in the catalytic domain of F(1) is coupled via a rotary mechanism of the central stalk subunits to proton translocation. In terms of biological role, key component of the F(0) channel; it plays a direct role in translocation across the membrane. A homomeric c-ring of between 10-14 subunits forms the central stalk rotor element with the F(1) delta and epsilon subunits. The chain is ATP synthase subunit c from Priestia megaterium (strain ATCC 12872 / QMB1551) (Bacillus megaterium).